A 298-amino-acid chain; its full sequence is Lipoyl synthase (298 aa).

[4Fe-4S] cluster-binding residues include C40, C45, C51, C67, C71, C74, and S280. The Radical SAM core domain maps to 53 to 269 (AVRRTATFMI…KEIALSKGFS (217 aa)).

This sequence belongs to the radical SAM superfamily. Lipoyl synthase family. It depends on [4Fe-4S] cluster as a cofactor.

Its subcellular location is the cytoplasm. It carries out the reaction [[Fe-S] cluster scaffold protein carrying a second [4Fe-4S](2+) cluster] + N(6)-octanoyl-L-lysyl-[protein] + 2 oxidized [2Fe-2S]-[ferredoxin] + 2 S-adenosyl-L-methionine + 4 H(+) = [[Fe-S] cluster scaffold protein] + N(6)-[(R)-dihydrolipoyl]-L-lysyl-[protein] + 4 Fe(3+) + 2 hydrogen sulfide + 2 5'-deoxyadenosine + 2 L-methionine + 2 reduced [2Fe-2S]-[ferredoxin]. Its pathway is protein modification; protein lipoylation via endogenous pathway; protein N(6)-(lipoyl)lysine from octanoyl-[acyl-carrier-protein]. In terms of biological role, catalyzes the radical-mediated insertion of two sulfur atoms into the C-6 and C-8 positions of the octanoyl moiety bound to the lipoyl domains of lipoate-dependent enzymes, thereby converting the octanoylated domains into lipoylated derivatives. The polypeptide is Lipoyl synthase (Geobacillus kaustophilus (strain HTA426)).